The primary structure comprises 182 residues: uncharacterized protein (182 aa).

BNR repeat units lie at residues 58 to 69 (WISFDAGENWET) and 102 to 113 (YITDDRGESWRA).

This is an uncharacterized protein from Saccharomyces cerevisiae (strain ATCC 204508 / S288c) (Baker's yeast).